The chain runs to 292 residues: Rab effector Noc2 (292 aa).

Residues 41–158 (QRKSQSLSPA…KRSGAWFYKG (118 aa)) form the RabBD domain. The FYVE-type zinc-finger motif lies at 89–146 (GNGLSQCLLCGEVLGFLGSSSVFCKDCRKKVCTKCGIEASPSQKRPLWLCKICSEQRE). Residues C95, C98, C112, C115, C120, C123, C138, and C141 each contribute to the Zn(2+) site. A disordered region spans residues 175-292 (PSFRPLPVEP…RTLAGPRGPR (118 aa)). Residues 221–235 (LDDRLRPAGVRDPKG) show a composition bias toward basic and acidic residues. S248 carries the phosphoserine modification. The segment covering 257-269 (ASCLSGSQSSLAS) has biased composition (low complexity).

As to quaternary structure, recruited to dense-core vesicles through specific interaction with RAB27A in endocrine cells. Interacts with RAB3A, RAB3B, RAB3C and RAB3D. Interacts with ZYX.

It is found in the cytoplasm. Its subcellular location is the cytoplasmic vesicle. The protein resides in the secretory vesicle membrane. Functionally, rab GTPase effector involved in the late steps of regulated exocytosis, both in endocrine and exocrine cells. This is Rab effector Noc2 (RPH3AL) from Bos taurus (Bovine).